We begin with the raw amino-acid sequence, 235 residues long: Phosphoribosylaminoimidazole-succinocarboxamide synthase (235 aa).

It belongs to the SAICAR synthetase family.

The enzyme catalyses 5-amino-1-(5-phospho-D-ribosyl)imidazole-4-carboxylate + L-aspartate + ATP = (2S)-2-[5-amino-1-(5-phospho-beta-D-ribosyl)imidazole-4-carboxamido]succinate + ADP + phosphate + 2 H(+). Its pathway is purine metabolism; IMP biosynthesis via de novo pathway; 5-amino-1-(5-phospho-D-ribosyl)imidazole-4-carboxamide from 5-amino-1-(5-phospho-D-ribosyl)imidazole-4-carboxylate: step 1/2. The protein is Phosphoribosylaminoimidazole-succinocarboxamide synthase of Clostridium botulinum (strain Alaska E43 / Type E3).